Here is a 195-residue protein sequence, read N- to C-terminus: Lipid A acyltransferase PagP (195 aa).

The signal sequence occupies residues 1–30 (MRLTLTSRSRLFVLSSLLFISTFDVLSAQA). Residues His67, Asp110, and Ser111 contribute to the active site.

It belongs to the lipid A palmitoyltransferase family. As to quaternary structure, homodimer.

The protein localises to the cell outer membrane. The enzyme catalyses a lipid A + a 1,2-diacyl-sn-glycero-3-phosphocholine = a hepta-acyl lipid A + a 2-acyl-sn-glycero-3-phosphocholine. It catalyses the reaction a lipid IVA + a 1,2-diacyl-sn-glycero-3-phosphocholine = a lipid IVB + a 2-acyl-sn-glycero-3-phosphocholine. The catalysed reaction is a lipid IIA + a 1,2-diacyl-sn-glycero-3-phosphocholine = a lipid IIB + a 2-acyl-sn-glycero-3-phosphocholine. Functionally, transfers a fatty acid residue from the sn-1 position of a phospholipid to the N-linked hydroxyfatty acid chain on the proximal unit of lipid A or its precursors. This is Lipid A acyltransferase PagP from Dickeya chrysanthemi (strain Ech1591) (Dickeya zeae (strain Ech1591)).